We begin with the raw amino-acid sequence, 635 residues long: DNA mismatch repair protein MutL (635 aa).

Residues G359–Y399 form a disordered region. The segment covering A364 to A377 has biased composition (low complexity). The span at V378 to Y399 shows a compositional bias: basic and acidic residues.

Belongs to the DNA mismatch repair MutL/HexB family.

In terms of biological role, this protein is involved in the repair of mismatches in DNA. It is required for dam-dependent methyl-directed DNA mismatch repair. May act as a 'molecular matchmaker', a protein that promotes the formation of a stable complex between two or more DNA-binding proteins in an ATP-dependent manner without itself being part of a final effector complex. The chain is DNA mismatch repair protein MutL from Yersinia pestis bv. Antiqua (strain Antiqua).